The following is a 98-amino-acid chain: MNQERILQVLRAPHVSEKATVQADQNNTFVFKVAKDASKLEIKKAVEALFEVKVEAVRTANMKGKSKFFGRVAGKRVDWKKAYVSLAEGQDIDFLGAE.

This sequence belongs to the universal ribosomal protein uL23 family. Part of the 50S ribosomal subunit. Contacts protein L29, and trigger factor when it is bound to the ribosome.

In terms of biological role, one of the early assembly proteins it binds 23S rRNA. One of the proteins that surrounds the polypeptide exit tunnel on the outside of the ribosome. Forms the main docking site for trigger factor binding to the ribosome. The chain is Large ribosomal subunit protein uL23 from Alcanivorax borkumensis (strain ATCC 700651 / DSM 11573 / NCIMB 13689 / SK2).